The primary structure comprises 181 residues: Oligoribonuclease (181 aa).

One can recognise an Exonuclease domain in the interval 8 to 171 (LIWIDLEMTG…DDIRESVAEL (164 aa)). Tyrosine 129 is an active-site residue.

Belongs to the oligoribonuclease family.

It is found in the cytoplasm. In terms of biological role, 3'-to-5' exoribonuclease specific for small oligoribonucleotides. The protein is Oligoribonuclease of Enterobacter sp. (strain 638).